The primary structure comprises 299 residues: tRNA dimethylallyltransferase (299 aa).

8–15 (GPTASGKT) is a binding site for ATP. 10–15 (TASGKT) contacts substrate. An interaction with substrate tRNA region spans residues 33 to 36 (DSQQ).

It belongs to the IPP transferase family. Monomer. Mg(2+) serves as cofactor.

The catalysed reaction is adenosine(37) in tRNA + dimethylallyl diphosphate = N(6)-dimethylallyladenosine(37) in tRNA + diphosphate. Catalyzes the transfer of a dimethylallyl group onto the adenine at position 37 in tRNAs that read codons beginning with uridine, leading to the formation of N6-(dimethylallyl)adenosine (i(6)A). The protein is tRNA dimethylallyltransferase of Anaeromyxobacter dehalogenans (strain 2CP-C).